Consider the following 636-residue polypeptide: Ligand-gated ion channel 4 (636 aa).

The N-terminal stretch at 1–25 (MVICHSCTTFCILLVIDLVPCRIVG) is a signal peptide. At 26 to 326 (MENVENRVMF…IHMHRRPLFY (301 aa)) the chain is on the extracellular side. N45, N141, N179, and N227 each carry an N-linked (GlcNAc...) asparagine glycan. C240 and C254 form a disulfide bridge. Residue N284 is glycosylated (N-linked (GlcNAc...) asparagine). Helical transmembrane passes span 327-347 (VFNH…GFLM), 357-377 (MIIT…ESIP), and 383-403 (VPLI…ATCV). Over 404-602 (NVITLNMHRN…QLASVVDRLL (199 aa)) the chain is Cytoplasmic. Residues 603–623 (LCLFCTATLFTIICLLIVPVV) traverse the membrane as a helical segment.

Belongs to the ligand-gated ion channel (TC 1.A.9) family.

It localises to the postsynaptic cell membrane. Its subcellular location is the cell membrane. Acetylcholine receptor. This chain is Ligand-gated ion channel 4, found in Caenorhabditis briggsae.